We begin with the raw amino-acid sequence, 234 residues long: Sugar fermentation stimulation protein homolog (234 aa).

It belongs to the SfsA family.

This chain is Sugar fermentation stimulation protein homolog, found in Shewanella putrefaciens (strain CN-32 / ATCC BAA-453).